We begin with the raw amino-acid sequence, 430 residues long: Enolase (430 aa).

A (2R)-2-phosphoglycerate-binding site is contributed by glutamine 167. Residue glutamate 209 is the Proton donor of the active site. Mg(2+)-binding residues include aspartate 246, glutamate 289, and aspartate 316. Positions 341, 370, 371, and 392 each coordinate (2R)-2-phosphoglycerate. Lysine 341 serves as the catalytic Proton acceptor.

It belongs to the enolase family. Component of the RNA degradosome, a multiprotein complex involved in RNA processing and mRNA degradation. It depends on Mg(2+) as a cofactor.

It localises to the cytoplasm. Its subcellular location is the secreted. The protein resides in the cell surface. The catalysed reaction is (2R)-2-phosphoglycerate = phosphoenolpyruvate + H2O. It functions in the pathway carbohydrate degradation; glycolysis; pyruvate from D-glyceraldehyde 3-phosphate: step 4/5. Functionally, catalyzes the reversible conversion of 2-phosphoglycerate (2-PG) into phosphoenolpyruvate (PEP). It is essential for the degradation of carbohydrates via glycolysis. The chain is Enolase from Alcanivorax borkumensis (strain ATCC 700651 / DSM 11573 / NCIMB 13689 / SK2).